We begin with the raw amino-acid sequence, 257 residues long: MMHILVSNDDGYQAPGILALAEALSEMARVTVVAPERDRSGASNSLTLDYPLRVHGTGPHRYRVEGTPTDCVHLAITGLLSEEPDMVVSGINAGANMGDDVLYSGTVAAATEGRFLGLPAIAISLNAFEPRHLATAARVAQLIVQRLSRDPLPSDTILNINVPDLPWHEVQGWEATRLGRRHRAEPVVRDEDPRGRAIYWIGPPGSEEDAGPGTDFYAVRNGYVSVTPIQVDLTRYTALDQVAGWVSGLGRPAEEGH.

Asp9, Asp10, Ser40, and Asn92 together coordinate a divalent metal cation.

The protein belongs to the SurE nucleotidase family. A divalent metal cation is required as a cofactor.

Its subcellular location is the cytoplasm. It carries out the reaction a ribonucleoside 5'-phosphate + H2O = a ribonucleoside + phosphate. Nucleotidase that shows phosphatase activity on nucleoside 5'-monophosphates. The chain is 5'-nucleotidase SurE from Alkalilimnicola ehrlichii (strain ATCC BAA-1101 / DSM 17681 / MLHE-1).